The sequence spans 377 residues: O-phospho-L-seryl-tRNA:Cys-tRNA synthase (377 aa).

Pyridoxal 5'-phosphate-binding positions include 82 to 83 (AR), Asn-189, and 212 to 214 (SGH). Position 215 is an N6-(pyridoxal phosphate)lysine (Lys-215).

The protein belongs to the SepCysS family. As to quaternary structure, homodimer. Interacts with SepRS. Pyridoxal 5'-phosphate serves as cofactor.

The enzyme catalyses O-phospho-L-seryl-tRNA(Cys) + hydrogen sulfide + H(+) = L-cysteinyl-tRNA(Cys) + phosphate. Functionally, converts O-phospho-L-seryl-tRNA(Cys) (Sep-tRNA(Cys)) to L-cysteinyl-tRNA(Cys) (Cys-tRNA(Cys)). This Methanocaldococcus jannaschii (strain ATCC 43067 / DSM 2661 / JAL-1 / JCM 10045 / NBRC 100440) (Methanococcus jannaschii) protein is O-phospho-L-seryl-tRNA:Cys-tRNA synthase.